The chain runs to 422 residues: Serine protease HTRA2, mitochondrial (422 aa).

The N-terminal 17 residues, methionine 1–isoleucine 17, are a transit peptide targeting the mitochondrion. Positions alanine 18–glycine 74 are excised as a propeptide. Residues asparagine 28–glutamate 55 form a disordered region. Residues asparagine 42–asparagine 53 show a composition bias toward low complexity. Residues leucine 64–isoleucine 82 traverse the membrane as a helical segment. 2 consecutive short sequence motifs (IAP-binding) follow at residues alanine 75–serine 78 and serine 94–threonine 97. Residues serine 139–leucine 302 are serine protease. Catalysis depends on charge relay system residues histidine 157, aspartate 189, and serine 266. The PDZ domain maps to methionine 325 to valine 410.

It belongs to the peptidase S1C family. As to quaternary structure, interacts with th/DIAP1 (via BIR 2 domain).

The protein localises to the mitochondrion intermembrane space. It is found in the mitochondrion membrane. It catalyses the reaction Cleavage of non-polar aliphatic amino-acids at the P1 position, with a preference for Val, Ile and Met. At the P2 and P3 positions, Arg is selected most strongly with a secondary preference for other hydrophilic residues.. Functionally, serine protease that shows proteolytic activity against a non-specific substrate beta-casein. Promotes or induces cell death either by direct binding to and inhibition of BIRC proteins (also called inhibitor of apoptosis proteins, IAPs), leading to an increase in caspase activity, or by a BIRC inhibition-independent, caspase-independent and serine protease activity-dependent mechanism. Can antagonize antiapoptotic activity of th/Diap1 by directly inducing the degradation of th/Diap1. The sequence is that of Serine protease HTRA2, mitochondrial from Drosophila sechellia (Fruit fly).